The following is an 858-amino-acid chain: Elongation factor 2 (858 aa).

Residues 17–362 (ANIRNMSVIA…MITIHLPSPV (346 aa)) form the tr-type G domain. GTP-binding positions include 26 to 33 (AHVDHGKS), 158 to 161 (NKMD), and 216 to 218 (SGL). The residue at position 715 (H715) is a Diphthamide.

Belongs to the TRAFAC class translation factor GTPase superfamily. Classic translation factor GTPase family. EF-G/EF-2 subfamily. Binds to 80S ribosomes. Actively translating ribosomes show mutually exclusive binding of eIF5a (EIF5A or EIF5A2) and EEF2/eEF2. Interacts with serbp1; interaction sequesters eef2/eEF2 at the A-site of the ribosome, thereby blocking the interaction sites of the mRNA-tRNA complex, promoting ribosome stabilization and hibernation. Interacts with habp4; interaction takes place at the A-site of hibernating ribosomes and promotes ribosome stabilization.

It is found in the cytoplasm. It localises to the nucleus. The enzyme catalyses GTP + H2O = GDP + phosphate + H(+). Catalyzes the GTP-dependent ribosomal translocation step during translation elongation. During this step, the ribosome changes from the pre-translocational (PRE) to the post-translocational (POST) state as the newly formed A-site-bound peptidyl-tRNA and P-site-bound deacylated tRNA move to the P and E sites, respectively. Catalyzes the coordinated movement of the two tRNA molecules, the mRNA and conformational changes in the ribosome. This is Elongation factor 2 from Xenopus laevis (African clawed frog).